Consider the following 205-residue polypeptide: TATA-box-binding protein (205 aa).

Tandem repeats lie at residues 27-103 (LQNI…ARII) and 117-194 (IQNI…YPVL).

Belongs to the TBP family. As to quaternary structure, belongs to the TFIID complex together with the TBP-associated factors (TAFs). Binds DNA as monomer.

The protein resides in the nucleus. Functionally, general transcription factor that functions at the core of the DNA-binding multiprotein factor TFIID. Binding of TFIID to the TATA box is the initial transcriptional step of the pre-initiation complex (PIC), playing a role in the activation of eukaryotic genes transcribed by RNA polymerase II. The protein is TATA-box-binding protein (tbpA) of Dictyostelium discoideum (Social amoeba).